We begin with the raw amino-acid sequence, 312 residues long: Protoheme IX farnesyltransferase 1 (312 aa).

A run of 9 helical transmembrane segments spans residues 21–41, 53–73, 105–125, 127–147, 156–176, 182–202, 225–245, 246–266, and 292–312; these read GVLAAYLALTKPRVIELLLVT, IPSPWLVLVTLAGGAMSAGSA, SALVFGIVLGVVSFAVLALGA, LLAAVLSLAAILFYVFVYTLV, IVWGGAAGCMPVVIGWAAVTG, ALVMFGVVFLWTPPHFWSLAM, VSARILVYSWATVACTLLLVP, ATSWVYVAFAVLAGAAFLIVA, and LALLFVAIAVDSAVGLPSFVA.

Belongs to the UbiA prenyltransferase family. Protoheme IX farnesyltransferase subfamily.

The protein localises to the cell membrane. The enzyme catalyses heme b + (2E,6E)-farnesyl diphosphate + H2O = Fe(II)-heme o + diphosphate. Its pathway is porphyrin-containing compound metabolism; heme O biosynthesis; heme O from protoheme: step 1/1. In terms of biological role, converts heme B (protoheme IX) to heme O by substitution of the vinyl group on carbon 2 of heme B porphyrin ring with a hydroxyethyl farnesyl side group. This is Protoheme IX farnesyltransferase 1 from Saccharopolyspora erythraea (strain ATCC 11635 / DSM 40517 / JCM 4748 / NBRC 13426 / NCIMB 8594 / NRRL 2338).